We begin with the raw amino-acid sequence, 238 residues long: Urease subunit alpha (238 aa).

Residues 1–102 (MKLTPKELDK…LVTVHTPIEA (102 aa)) are urease gamma. A urease beta region spans residues 103–238 (NGKLVPGELF…DDNYVKTIKE (136 aa)).

It in the N-terminal section; belongs to the urease gamma subunit family. This sequence in the C-terminal section; belongs to the urease beta subunit family. In terms of assembly, heterohexamer of 3 UreA (alpha) and 3 UreB (beta) subunits. Four heterohexamers assemble to form a 16 nm dodecameric complex.

The enzyme catalyses urea + 2 H2O + H(+) = hydrogencarbonate + 2 NH4(+). The protein operates within nitrogen metabolism; urea degradation; CO(2) and NH(3) from urea (urease route): step 1/1. The chain is Urease subunit alpha from Helicobacter pylori (strain J99 / ATCC 700824) (Campylobacter pylori J99).